Here is a 116-residue protein sequence, read N- to C-terminus: Large ribosomal subunit protein uL22c (116 aa).

It belongs to the universal ribosomal protein uL22 family. As to quaternary structure, part of the 50S ribosomal subunit.

The protein resides in the plastid. Its subcellular location is the chloroplast. Functionally, this protein binds specifically to 23S rRNA. In terms of biological role, the globular domain of the protein is located near the polypeptide exit tunnel on the outside of the subunit, while an extended beta-hairpin is found that lines the wall of the exit tunnel in the center of the 70S ribosome. In Euglena gracilis, this protein is Large ribosomal subunit protein uL22c (rpl22).